Consider the following 658-residue polypeptide: Alkyldihydroxyacetonephosphate synthase, peroxisomal (658 aa).

Disordered stretches follow at residues 1 to 41 (MAEA…LRVL) and 63 to 86 (AASAATAAPTATPAAQESGTIPKK). A peroxisome-targeting transit peptide spans 1–58 (MAEAAAAAGGTGLGAGASYGSAADRDRDPDPDRAGRRLRVLSGHLLGRPREALSTNEC). The segment covering 23–35 (ADRDRDPDPDRAG) has biased composition (basic and acidic residues). Over residues 63–77 (AASAATAAPTATPAA) the composition is skewed to low complexity. At Ser-65 the chain carries Phosphoserine. At Thr-74 the chain carries Phosphothreonine. Lys-102 is modified (N6-acetyllysine). One can recognise an FAD-binding PCMH-type domain in the interval 202–384 (FERIPDIVLW…TEATIKIRPV (183 aa)). Residues 234–240 (PIGGGTS), 303–309 (DSLEFST), and 316–319 (TRAS) each bind FAD. N6-acetyllysine is present on Lys-347. 368–374 (EGTLGVI) contacts FAD. A substrate-binding site is contributed by Arg-515. The active-site Proton donor/acceptor is the Tyr-578. Important for enzyme activity regions lie at residues 615–617 (HHH) and 654–658 (NRNLL).

It belongs to the FAD-binding oxidoreductase/transferase type 4 family. Homodimer. Requires FAD as cofactor.

It is found in the peroxisome membrane. Its subcellular location is the peroxisome. It carries out the reaction a long chain fatty alcohol + a 1-acylglycerone 3-phosphate = a 1-O-alkylglycerone 3-phosphate + a long-chain fatty acid + H(+). It catalyses the reaction hexadecan-1-ol + 1-hexadecanoylglycerone 3-phosphate = 1-O-hexadecylglycerone 3-phosphate + hexadecanoate + H(+). The enzyme catalyses 1-hexadecanoylglycerone 3-phosphate + a long-chain fatty acid = a 1-acylglycerone 3-phosphate + hexadecanoate. The protein operates within glycerolipid metabolism; ether lipid biosynthesis. In terms of biological role, catalyzes the exchange of the acyl chain in acyl-dihydroxyacetonephosphate (acyl-DHAP) for a long chain fatty alcohol, yielding the first ether linked intermediate, i.e. alkyl-dihydroxyacetonephosphate (alkyl-DHAP), in the pathway of ether lipid biosynthesis. In Homo sapiens (Human), this protein is Alkyldihydroxyacetonephosphate synthase, peroxisomal (AGPS).